The chain runs to 324 residues: O-ureido-L-serine synthase (324 aa).

N6-(pyridoxal phosphate)lysine is present on lysine 43. Pyridoxal 5'-phosphate is bound by residues asparagine 73, 177–181, and serine 265; that span reads GTTGT.

The protein belongs to the cysteine synthase/cystathionine beta-synthase family. Homotetramer. The cofactor is pyridoxal 5'-phosphate.

It catalyses the reaction hydroxyurea + O-acetyl-L-serine = O-ureido-L-serine + acetate + H(+). The catalysed reaction is O-acetyl-L-serine + hydrogen sulfide = L-cysteine + acetate. Its function is as follows. Involved in the biosynthesis of the antibiotic D-cycloserine (DCS), a cyclic structural analog of D-alanine, used as an antitubercular agent. Catalyzes the addition of hydroxyurea on O-acetyl-L-serine (OAS) to yield O-ureido-L-serine. It prefers sulfide as the second substrate, followed by hydroxyurea, L-homocysteine, and thiosulfate. The chain is O-ureido-L-serine synthase from Streptomyces lavendulae.